We begin with the raw amino-acid sequence, 131 residues long: Ribonuclease P protein component (131 aa).

Belongs to the RnpA family. Consists of a catalytic RNA component (M1 or rnpB) and a protein subunit.

The catalysed reaction is Endonucleolytic cleavage of RNA, removing 5'-extranucleotides from tRNA precursor.. Its function is as follows. RNaseP catalyzes the removal of the 5'-leader sequence from pre-tRNA to produce the mature 5'-terminus. It can also cleave other RNA substrates such as 4.5S RNA. The protein component plays an auxiliary but essential role in vivo by binding to the 5'-leader sequence and broadening the substrate specificity of the ribozyme. This Cyanothece sp. (strain PCC 7425 / ATCC 29141) protein is Ribonuclease P protein component.